A 661-amino-acid polypeptide reads, in one-letter code: Ubiquitin-associated and SH3 domain-containing protein A (661 aa).

The UBA domain maps to 15 to 60; sequence KLKSRSSPSLLEPLLAMGFPVHTALKALAATGRKTAEEALAWLHDH. In terms of domain architecture, SH3 spans 276–341; that stretch reads VHYQTLRALF…PENYTDRASE (66 aa). Positions 395 to 661 are phosphatase-like; sequence RKSVLVVRHG…FNWRNWISGN (267 aa).

In terms of assembly, homodimer or homooligomer. Interacts with CBL. Part of a complex containing CBL and activated EGFR. Interacts with ubiquitin and with mono-ubiquitinated proteins. Interacts with dynamin. Highest expression of UBASH3A in tissues belonging to the immune system, including spleen, peripheral blood leukocytes, thymus and bone marrow.

Its subcellular location is the cytoplasm. It is found in the nucleus. Interferes with CBL-mediated down-regulation and degradation of receptor-type tyrosine kinases. Promotes accumulation of activated target receptors, such as T-cell receptors, EGFR and PDGFRB, on the cell surface. Exhibits negligible protein tyrosine phosphatase activity at neutral pH. May act as a dominant-negative regulator of UBASH3B-dependent dephosphorylation. May inhibit dynamin-dependent endocytic pathways by functionally sequestering dynamin via its SH3 domain. In Homo sapiens (Human), this protein is Ubiquitin-associated and SH3 domain-containing protein A (UBASH3A).